The primary structure comprises 934 residues: Serine/threonine-protein kinase atg1 (934 aa).

A Protein kinase domain is found at 22-328 (YTRLDEIGRG…SDFFDCDTIT (307 aa)). ATP is bound by residues 28-36 (IGRGSFATV) and K51. D165 functions as the Proton acceptor in the catalytic mechanism. 6 disordered regions span residues 335–432 (IADD…PRRP), 462–481 (RNTY…TKEE), 531–580 (RRPG…YGQS), 684–703 (TDPS…TDLT), 800–822 (RLPP…GSGA), and 878–900 (EEEE…RRDG). A compositionally biased stretch (polar residues) spans 340–368 (PSTSRRSSVAVNTSGSTSRPQSRTGSRTP). The span at 371-386 (MKREKDASYPGKKDDQ) shows a compositional bias: basic and acidic residues. Residues 538-550 (SSTATATSPLATT) show a composition bias toward low complexity. Residues 561 to 577 (ARADSTHTRQGSYERRY) show a composition bias toward basic and acidic residues.

It belongs to the protein kinase superfamily. Ser/Thr protein kinase family. APG1/unc-51/ULK1 subfamily. As to quaternary structure, homodimer. Forms a ternary complex with ATG13 and ATG17.

It localises to the cytoplasm. The protein localises to the preautophagosomal structure membrane. It catalyses the reaction L-seryl-[protein] + ATP = O-phospho-L-seryl-[protein] + ADP + H(+). The enzyme catalyses L-threonyl-[protein] + ATP = O-phospho-L-threonyl-[protein] + ADP + H(+). Functionally, serine/threonine protein kinase involved in the cytoplasm to vacuole transport (Cvt) and found to be essential in autophagy, where it is required for the formation of autophagosomes. Involved in the clearance of protein aggregates which cannot be efficiently cleared by the proteasome. Required for selective autophagic degradation of the nucleus (nucleophagy) as well as for mitophagy which contributes to regulate mitochondrial quantity and quality by eliminating the mitochondria to a basal level to fulfill cellular energy requirements and preventing excess ROS production. Also involved in endoplasmic reticulum-specific autophagic process, in selective removal of ER-associated degradation (ERAD) substrates. Plays a key role in ATG9 and ATG23 cycling through the pre-autophagosomal structure and is necessary to promote ATG18 binding to ATG9 through phosphorylation of ATG9. Catalyzes phosphorylation of ATG4, decreasing the interaction between ATG4 and ATG8 and impairing deconjugation of PE-conjugated forms of ATG8. Required for conidiation and development of aerial hyphae. The polypeptide is Serine/threonine-protein kinase atg1 (Aspergillus oryzae (strain ATCC 42149 / RIB 40) (Yellow koji mold)).